The chain runs to 218 residues: Probable transaldolase (218 aa).

Lysine 87 serves as the catalytic Schiff-base intermediate with substrate.

This sequence belongs to the transaldolase family. Type 3B subfamily.

It localises to the cytoplasm. The catalysed reaction is D-sedoheptulose 7-phosphate + D-glyceraldehyde 3-phosphate = D-erythrose 4-phosphate + beta-D-fructose 6-phosphate. The protein operates within carbohydrate degradation; pentose phosphate pathway; D-glyceraldehyde 3-phosphate and beta-D-fructose 6-phosphate from D-ribose 5-phosphate and D-xylulose 5-phosphate (non-oxidative stage): step 2/3. Its function is as follows. Transaldolase is important for the balance of metabolites in the pentose-phosphate pathway. The polypeptide is Probable transaldolase (Bacteroides fragilis (strain YCH46)).